Here is a 402-residue protein sequence, read N- to C-terminus: La-related protein 7 homolog (402 aa).

Residues 64–138 (EPLNPDFLSA…FDNSSHMVIR (75 aa)) form an HTH La-type RNA-binding-like region region. Residues 148 to 230 (IPLYDRIIYV…LTRKEWTNRE (83 aa)) form an RRM-like region region. The interval 288 to 400 (DFTKNLLTRI…EEEKNYWRML (113 aa)) is xRRM-like region. One can recognise a xRRM domain in the interval 288-402 (DFTKNLLTRI…EKNYWRMLKK (115 aa)).

Belongs to the LARP7 family. In terms of assembly, component of the telomerase holoenzyme complex composed minimally of trt1 and the telomerase RNA template component. Interacts with skp1.

The protein localises to the chromosome. Its subcellular location is the telomere. It is found in the nucleus. It localises to the cytoplasm. RNA-binding protein required for assembly of the holoenzyme telomerase ribonucleoprotein (RNP) complex. Specifically binds telomerase RNA ter1 and promotes assembly of ter1 with catalytic subunit trt1. Telomerase is a ribonucleoprotein enzyme essential that copies new telomeric repeats onto chromosome ends and functions to maintain cell division. This Schizosaccharomyces pombe (strain 972 / ATCC 24843) (Fission yeast) protein is La-related protein 7 homolog.